Here is an 865-residue protein sequence, read N- to C-terminus: Anaphase-promoting complex subunit 6 (865 aa).

TPR repeat units follow at residues 11-42 (IEKQLKEKIENALSIHSYPTAIFFSDKLLNLV), 46-75 (SKEYVKILYILCDALYLDRQFQRSSYLIQK), and 88-149 (EDYQ…LQIL). The segment at 153 to 293 (NDSSENMDDE…NNNNNNNNNF (141 aa)) is disordered. The segment covering 183-202 (NCDDDDDDDDDDDDDDDDEK) has biased composition (acidic residues). Low complexity predominate over residues 249 to 292 (NKNNNKNNNNNNNNNNNNNNNNNNNNNNNNNNNNNNNNNNNNNN). TPR repeat units follow at residues 300–331 (IRSSISCLKGKCYESMDNLKKAKFWYIKALLT), 336–359 (FEAFESLTKNHLLTYQEEISLLEK), 366–438 (DSWI…DIST), 478–506 (DIQTWISEYYFYRHQFQESYSITKRILKQ), 515–542 (CLMVNISSMFELQLTNELYFTCHQLVDS), 573–602 (AISWYGVACYYHLIQNSDQTQRFFTKSTTL), 607–635 (GASWLGFGHFFASKGEHDQAMAAYRTSSR), 642–670 (LPLLCIGMELIRVHNLNLASQYILQAKDI), and 675–709 (PMIFNELGIIEYKNSQYNEAIKLFETALEICKIKS). Positions 403–434 (SNNNTFGANNNNNNNNNNNNNNNNNNNNNSNN) are enriched in low complexity. A disordered region spans residues 403–436 (SNNNTFGANNNNNNNNNNNNNNNNNNNNNSNNDI). A disordered region spans residues 738–767 (GIGNNNNNNNNRRTTTTTTTTSNNQKKNSS). 2 TPR repeats span residues 777 to 809 (ESWEPTIYNLAHCYRKLRKFELALHYYTMSLSL) and 814 to 843 (PSTYSALGFTHHLQGNFDEAIDYYHQSLSI).

This sequence belongs to the APC6/CDC16 family. As to quaternary structure, the APC/C is composed of at least 13 subunits that stay tightly associated throughout the cell cycle: anapc1, anapc2, anapc3, anapc4, anapc5, anapc6, anapc7, anapc8, anapc10, anapc11, cdc20, cdc26 and cdh1.

The protein resides in the nucleus. It functions in the pathway protein modification; protein ubiquitination. Its function is as follows. Component of the anaphase promoting complex/cyclosome (APC/C), a cell cycle-regulated E3 ubiquitin-protein ligase complex that controls progression through mitosis and the G1 phase of the cell cycle. The polypeptide is Anaphase-promoting complex subunit 6 (anapc6) (Dictyostelium discoideum (Social amoeba)).